The chain runs to 127 residues: Flagellar assembly factor FliW (127 aa).

Belongs to the FliW family. As to quaternary structure, interacts with translational regulator CsrA and flagellin(s).

The protein localises to the cytoplasm. Functionally, acts as an anti-CsrA protein, binds CsrA and prevents it from repressing translation of its target genes, one of which is flagellin. Binds to flagellin and participates in the assembly of the flagellum. The chain is Flagellar assembly factor FliW from Campylobacter concisus (strain 13826).